The following is a 183-amino-acid chain: D-glycero-alpha-D-manno-heptose-1,7-bisphosphate 7-phosphatase (183 aa).

Zn(2+)-binding residues include cysteine 93, histidine 95, cysteine 108, and cysteine 110.

Belongs to the GmhB family.

The protein localises to the cytoplasm. It catalyses the reaction D-glycero-alpha-D-manno-heptose 1,7-bisphosphate + H2O = D-glycero-alpha-D-manno-heptose 1-phosphate + phosphate. Its pathway is nucleotide-sugar biosynthesis; GDP-D-glycero-alpha-D-manno-heptose biosynthesis; GDP-D-glycero-alpha-D-manno-heptose from D-glycero-alpha-D-manno-heptose 7-phosphate: step 2/3. In terms of biological role, converts the D-glycero-alpha-D-manno-heptose 1,7-bisphosphate intermediate into D-glycero-alpha-D-manno-heptose 1-phosphate by removing the phosphate group at the C-7 position. The protein is D-glycero-alpha-D-manno-heptose-1,7-bisphosphate 7-phosphatase (gmhB2) of Photorhabdus laumondii subsp. laumondii (strain DSM 15139 / CIP 105565 / TT01) (Photorhabdus luminescens subsp. laumondii).